The following is a 453-amino-acid chain: Calcium-binding tyrosine phosphorylation-regulated protein (453 aa).

In terms of domain architecture, RIIa spans 12–49; that stretch reads YGLKTLLEGVSRAILKTNPTNITQFAAVYFKELIVFRE. 3 disordered regions span residues 86–165, 246–278, and 406–453; these read PIKP…PVSA, PVSE…QVTS, and IINP…PEQV. The span at 143–154 shows a compositional bias: low complexity; the sequence is DKPTTPKTDYTP.

In terms of assembly, interacts with FSCB. Phosphorylated on tyrosine residues during in vitro capacitation. Dephosphorylation affects its ability to bind calcium. As to expression, expressed in spermatozoa.

The protein resides in the cytoplasm. It is found in the cytoskeleton. It localises to the cell projection. Its subcellular location is the cilium. The protein localises to the flagellum. In terms of biological role, may function as a regulator of both motility- and head-associated functions such as capacitation and the acrosome reaction. May bind calcium in vitro. The chain is Calcium-binding tyrosine phosphorylation-regulated protein (Cabyr) from Mus musculus (Mouse).